We begin with the raw amino-acid sequence, 1205 residues long: Partitioning defective 3 homolog B (1205 aa).

Disordered stretches follow at residues 83-104 (EPLH…PDAF) and 137-165 (VRRS…SLKL). At S100 the chain carries Phosphoserine. In terms of domain architecture, PDZ 1 spans 201 to 289 (TRTVEISGEG…SPSVLLHVLP (89 aa)). The tract at residues 318-374 (VPPPVHGKSGLKTANLTGTDSPETDASASLQQNKSPRVPRLGGKPSSPSLSPLMGFG) is disordered. A compositionally biased stretch (polar residues) spans 329–352 (KTANLTGTDSPETDASASLQQNKS). Phosphoserine occurs at positions 346, 352, and 368. A compositionally biased stretch (low complexity) spans 356–374 (PRLGGKPSSPSLSPLMGFG). PDZ domains follow at residues 383–468 (KIDL…VIAR) and 498–585 (EIPL…GMIQ). Residues S635, S710, S728, S730, S746, S749, and S801 each carry the phosphoserine modification. The disordered stretch occupies residues 707 to 743 (ASKSMDLVPDESKVHSLAGQKSESPSKDFGPTLGLKK). Disordered stretches follow at residues 784–921 (AIDK…KHQE) and 1111–1205 (PYYP…TAAV). Over residues 806 to 822 (HSGQGALNCESAPQGNS) the composition is skewed to polar residues. Basic and acidic residues-rich tracts occupy residues 838-865 (KEKE…DPER) and 881-921 (KKED…KHQE). S1184 carries the phosphoserine modification.

This sequence belongs to the PAR3 family. In terms of assembly, interacts with PARD6B. Interacts with INSC/inscuteable. Highly expressed in kidney, lung and skeletal muscle. Expressed at intermediate levels in brain, heart, placenta, liver and pancreas. Isoform 1 is predominant, while isoform 2 and isoform 3 are expressed at lower levels.

The protein localises to the endomembrane system. The protein resides in the cell junction. Its subcellular location is the tight junction. In terms of biological role, putative adapter protein involved in asymmetrical cell division and cell polarization processes. May play a role in the formation of epithelial tight junctions. The chain is Partitioning defective 3 homolog B (PARD3B) from Homo sapiens (Human).